A 276-amino-acid polypeptide reads, in one-letter code: Malectin-A (276 aa).

Residues 1 to 26 form the signal peptide; that stretch reads MLSIRTVLGPLATILLTVLGPFGAHG. Over 27 to 253 the chain is Lumenal; it reads SGLADKVIWA…TPNPYASDNS (227 aa). Residues tyrosine 67, tyrosine 89, tyrosine 116, phenylalanine 117, and aspartate 186 each coordinate a carbohydrate. Residues 204–247 are disordered; it reads PMLQPHPGLEKKEEEEEEEEEEGSTSKKQINKNRVQSGPRTPNP. The span at 216 to 226 shows a compositional bias: acidic residues; sequence EEEEEEEEEEG. A compositionally biased stretch (polar residues) spans 229 to 247; that stretch reads SKKQINKNRVQSGPRTPNP. Asparagine 252 carries N-linked (GlcNAc...) asparagine glycosylation. Residues 254-274 traverse the membrane as a helical segment; sequence SLMFPILVAFGVFIPTLFCLC. The Cytoplasmic portion of the chain corresponds to 275-276; the sequence is RL.

This sequence belongs to the malectin family. In terms of tissue distribution, widely expressed throughout development including the anterior neuroectoderm and neural crest at stages 18 and 20, and the retina, hatching gland, otic vesicle, epibranchial placodes, pronephros and tail tip of later states. At stage 41, expressed in the liver, pancreas, branchial arches and proctodeum. Expressed broadly in adults in fat, intestine, gall bladder, eye, muscle, kidney, stomach, liver, heart, pancreas and lung.

The protein localises to the endoplasmic reticulum membrane. Its function is as follows. Carbohydrate-binding protein with a strong ligand preference for Glc2-N-glycan. May play a role in the early steps of protein N-glycosylation. Can bind di- or higher oligomers but not monomers of glucose, including maltose, maltotriose, maltotetraose, maltoheptaose, nigerose, kojibose, cellobiose and isomaltose, although based on their subcellular locations, these are unlikely to all be physiological ligands. This is Malectin-A from Xenopus laevis (African clawed frog).